The following is a 227-amino-acid chain: Dephospho-CoA kinase (227 aa).

Residues 31–227 (KIGLTGGIGS…EKLFQFINCL (197 aa)) form the DPCK domain. 39-44 (GSGKST) is a binding site for ATP.

The protein belongs to the CoaE family.

It localises to the cytoplasm. The catalysed reaction is 3'-dephospho-CoA + ATP = ADP + CoA + H(+). It functions in the pathway cofactor biosynthesis; coenzyme A biosynthesis; CoA from (R)-pantothenate: step 5/5. Its function is as follows. Catalyzes the phosphorylation of the 3'-hydroxyl group of dephosphocoenzyme A to form coenzyme A. This is Dephospho-CoA kinase from Clostridium tetani (strain Massachusetts / E88).